Consider the following 457-residue polypeptide: tRNA-2-methylthio-N(6)-dimethylallyladenosine synthase (457 aa).

Positions 3–120 (KKVYVKTFGC…LPQMIDARRE (118 aa)) constitute an MTTase N-terminal domain. [4Fe-4S] cluster contacts are provided by cysteine 12, cysteine 49, cysteine 83, cysteine 157, cysteine 161, and cysteine 164. In terms of domain architecture, Radical SAM core spans 143–377 (RVEGPSAFVS…QATIEENVAR (235 aa)). One can recognise a TRAM domain in the interval 380–447 (QSMLGKVERI…PHSLRGELVL (68 aa)).

This sequence belongs to the methylthiotransferase family. MiaB subfamily. In terms of assembly, monomer. The cofactor is [4Fe-4S] cluster.

Its subcellular location is the cytoplasm. The enzyme catalyses N(6)-dimethylallyladenosine(37) in tRNA + (sulfur carrier)-SH + AH2 + 2 S-adenosyl-L-methionine = 2-methylsulfanyl-N(6)-dimethylallyladenosine(37) in tRNA + (sulfur carrier)-H + 5'-deoxyadenosine + L-methionine + A + S-adenosyl-L-homocysteine + 2 H(+). Its function is as follows. Catalyzes the methylthiolation of N6-(dimethylallyl)adenosine (i(6)A), leading to the formation of 2-methylthio-N6-(dimethylallyl)adenosine (ms(2)i(6)A) at position 37 in tRNAs that read codons beginning with uridine. In Burkholderia pseudomallei (strain 1710b), this protein is tRNA-2-methylthio-N(6)-dimethylallyladenosine synthase.